The primary structure comprises 205 residues: MKIQSNVIKIIIVISLLIGVGALYLLLSLRTPEKPLAGQVNIYEDNVKIGGDFELIDQNGEIFNSDKLKGNLSLIYFGFTSCPDICPTSLNKMTEIVEILNKHKIDILPVFITIDPKRDTPIALKEYLKHFHPKFIGLTGNEQQIKDVTDKFKVFYARVHGDDDDPNYMLDHSSFTYLIDANGKYLKHFYLDSSPKEMMEFLRNE.

Positions 82, 86, and 172 each coordinate Cu cation.

It belongs to the SCO1/2 family.

This chain is SCO2-like protein RC0895, found in Rickettsia conorii (strain ATCC VR-613 / Malish 7).